Here is a 353-residue protein sequence, read N- to C-terminus: MRLTIIIPTCNNEATIRQLLISIESKEHYRILCIDGGSTDQTIPMIERLQRELKHISLIQLQNASIATCINKGLMEIKMTDPHDSDAFMVINPTSIVLPGKLDRLTAAFKNNDNIDMVIGQRAYNYHGEWKLKSADEFIKDNRIVTLTEQPDLLSMMSFDGKLFSAKFAELQCDVTLANTYNHEILVKAMQKATDIHLVSQMIVGDNDIDTHATSNNEDFKRYITEIMKIRQRVMEMLLLPEQRLLYSDMVDRILFNNSLKYYMNEHPAVTHTTIQLVKDYIMSMQHSDYVSQNMFDIINTVEFNGENWDREIYELWRQTLIQVGINRPTYKRFLIQLKGRKFAHRTKSMLKR.

Belongs to the glycosyltransferase 2 family.

This chain is Putative glycosyltransferase TagX (tagX), found in Staphylococcus aureus (strain MRSA252).